Here is a 460-residue protein sequence, read N- to C-terminus: Notoamide biosynthesis cluster transcriptional coactivator notR (460 aa).

The HTH iclR-type domain maps to 74–145; it reads LQDLARQVEI…EPMPNYVSHT (72 aa). Positions 107 to 126 form a DNA-binding region, H-T-H motif; it reads IQDLADLAGVPDIQLRRVIR. The segment at 300–320 is disordered; it reads TRDFTPQPESSPRPGSASSRV.

The protein resides in the nucleus. Transcription factor that probably regulates the expression of the gene cluster that mediates the biosynthesis of notoamide, a fungal indole alkaloid that belongs to a family of natural products containing a characteristic bicyclo[2.2.2]diazaoctane core. This is Notoamide biosynthesis cluster transcriptional coactivator notR from Aspergillus sp. (strain MF297-2).